The following is a 214-amino-acid chain: Octanoyltransferase (214 aa).

Residues 36-214 enclose the BPL/LPL catalytic domain; it reads GRESEMVWLL…QQKFDTIFLQ (179 aa). Residues 75 to 82, 147 to 149, and 160 to 162 contribute to the substrate site; these read RGGKYSYH, AFG, and GFS. C178 serves as the catalytic Acyl-thioester intermediate.

This sequence belongs to the LipB family.

It localises to the cytoplasm. It catalyses the reaction octanoyl-[ACP] + L-lysyl-[protein] = N(6)-octanoyl-L-lysyl-[protein] + holo-[ACP] + H(+). Its pathway is protein modification; protein lipoylation via endogenous pathway; protein N(6)-(lipoyl)lysine from octanoyl-[acyl-carrier-protein]: step 1/2. Catalyzes the transfer of endogenously produced octanoic acid from octanoyl-acyl-carrier-protein onto the lipoyl domains of lipoate-dependent enzymes. Lipoyl-ACP can also act as a substrate although octanoyl-ACP is likely to be the physiological substrate. This is Octanoyltransferase from Anaplasma marginale (strain Florida).